A 467-amino-acid polypeptide reads, in one-letter code: Asparagine--tRNA ligase (467 aa).

The protein belongs to the class-II aminoacyl-tRNA synthetase family. In terms of assembly, homodimer.

It localises to the cytoplasm. The catalysed reaction is tRNA(Asn) + L-asparagine + ATP = L-asparaginyl-tRNA(Asn) + AMP + diphosphate + H(+). In Legionella pneumophila (strain Lens), this protein is Asparagine--tRNA ligase.